Consider the following 508-residue polypeptide: Probable malate:quinone oxidoreductase (508 aa).

The protein belongs to the MQO family. FAD is required as a cofactor.

It carries out the reaction (S)-malate + a quinone = a quinol + oxaloacetate. It functions in the pathway carbohydrate metabolism; tricarboxylic acid cycle; oxaloacetate from (S)-malate (quinone route): step 1/1. This is Probable malate:quinone oxidoreductase from Chromohalobacter salexigens (strain ATCC BAA-138 / DSM 3043 / CIP 106854 / NCIMB 13768 / 1H11).